Reading from the N-terminus, the 178-residue chain is Putative type II secretion system M-type protein YghD (178 aa).

At 1 to 39 (MLRDKFIHYFQQWRERQLSRGEHWLAQHLAGRSPREKGM) the chain is on the cytoplasmic side. The helical transmembrane segment at 40–60 (LLAAVVFLFSVGYYVLIWQPL) threads the bilayer. At 61 to 178 (SERIEQQETI…NVQRLEFGRG (118 aa)) the chain is on the periplasmic side.

The protein belongs to the GSP M family.

The protein resides in the cell inner membrane. Functionally, involved in a type II secretion system (T2SS, formerly general secretion pathway, GSP) for the export of folded proteins across the outer membrane. The protein is Putative type II secretion system M-type protein YghD (yghD) of Escherichia coli (strain K12).